We begin with the raw amino-acid sequence, 258 residues long: uncharacterized protein (258 aa).

This is an uncharacterized protein from Haemophilus influenzae (Bacteriophage HP1).